Here is a 334-residue protein sequence, read N- to C-terminus: Cytoplasmic envelopment protein 2 (334 aa).

The protein belongs to the herpesviridae cytoplasmic envelopment protein 2 family. In terms of assembly, interacts with cytoplasmic envelopment protein 3 and with the capsid.

It localises to the virion tegument. Its subcellular location is the host cytoplasm. The protein localises to the host nucleus. Functionally, plays a critical role in cytoplasmic virus egress. Participates in the final step of tegumentation and envelope acquisition within the host cytoplasm by directly interacting with the capsid. Upon virion binding to target cell, a signaling cascade is triggered to disrupt the interaction with the capsid, thereby preparing capsid uncoating. The chain is Cytoplasmic envelopment protein 2 (ORF33) from Homo sapiens (Human).